Here is a 239-residue protein sequence, read N- to C-terminus: Small ribosomal subunit protein uS2 (239 aa).

The protein belongs to the universal ribosomal protein uS2 family.

This chain is Small ribosomal subunit protein uS2, found in Histophilus somni (strain 129Pt) (Haemophilus somnus).